We begin with the raw amino-acid sequence, 203 residues long: High frequency lysogenization protein HflD homolog (203 aa).

This sequence belongs to the HflD family.

It localises to the cytoplasm. It is found in the cell inner membrane. The protein is High frequency lysogenization protein HflD homolog of Dichelobacter nodosus (strain VCS1703A).